The primary structure comprises 410 residues: Histidine--tRNA ligase (410 aa).

The protein belongs to the class-II aminoacyl-tRNA synthetase family. In terms of assembly, homodimer.

It is found in the cytoplasm. It catalyses the reaction tRNA(His) + L-histidine + ATP = L-histidyl-tRNA(His) + AMP + diphosphate + H(+). The chain is Histidine--tRNA ligase from Campylobacter hominis (strain ATCC BAA-381 / DSM 21671 / CCUG 45161 / LMG 19568 / NCTC 13146 / CH001A).